Here is a 67-residue protein sequence, read N- to C-terminus: Large ribosomal subunit protein bL35 (67 aa).

The protein belongs to the bacterial ribosomal protein bL35 family.

The protein is Large ribosomal subunit protein bL35 of Brachyspira hyodysenteriae (strain ATCC 49526 / WA1).